The chain runs to 721 residues: Long-chain-fatty-acid--CoA ligase ACSBG1 (721 aa).

Residues 1 to 64 (MPRSSEAGYC…SHGLELSAPE (64 aa)) are disordered. The span at 26 to 43 (QQGASMGTSPDNSQTSSL) shows a compositional bias: polar residues. Phosphoserine occurs at positions 34, 50, 53, and 70. ATP-binding positions include 279 to 287 (TSGTTGNPK), 469 to 474 (AGYGLS), aspartate 547, and arginine 562. At tyrosine 655 the chain carries Phosphotyrosine. Residue lysine 698 participates in ATP binding.

It belongs to the ATP-dependent AMP-binding enzyme family. Bubblegum subfamily. As to expression, present in testis, at a lower level in brain, and at a very low level in ovary. Not detected in other tissues. tested. Present in Leydig cells of the adult testis and to a lesser degree in the seminiferous tubules in spermatogonia and Sertoli cells (at protein level).

The protein localises to the cytoplasm. It localises to the cytoplasmic vesicle. Its subcellular location is the microsome. It is found in the endoplasmic reticulum. The protein resides in the cell membrane. It carries out the reaction a long-chain fatty acid + ATP + CoA = a long-chain fatty acyl-CoA + AMP + diphosphate. The catalysed reaction is (E)-hexadec-2-enoate + ATP + CoA = (2E)-hexadecenoyl-CoA + AMP + diphosphate. The enzyme catalyses hexadecanoate + ATP + CoA = hexadecanoyl-CoA + AMP + diphosphate. Catalyzes the conversion of fatty acids such as long-chain and very long-chain fatty acids to their active form acyl-CoAs for both synthesis of cellular lipids, and degradation via beta-oxidation. Can activate diverse saturated, monosaturated and polyunsaturated fatty acids. The polypeptide is Long-chain-fatty-acid--CoA ligase ACSBG1 (Rattus norvegicus (Rat)).